The primary structure comprises 260 residues: Phosphonates import ATP-binding protein PhnC 2 (260 aa).

In terms of domain architecture, ABC transporter spans 4–245 (IQINKATKTY…KNTLRTIYQR (242 aa)). 37-44 (GPSGAGKS) contacts ATP.

This sequence belongs to the ABC transporter superfamily. Phosphonates importer (TC 3.A.1.9.1) family. The complex is composed of two ATP-binding proteins (PhnC), two transmembrane proteins (PhnE) and a solute-binding protein (PhnD).

It is found in the cell inner membrane. The catalysed reaction is phosphonate(out) + ATP + H2O = phosphonate(in) + ADP + phosphate + H(+). In terms of biological role, part of the ABC transporter complex PhnCDE involved in phosphonates import. Responsible for energy coupling to the transport system. The chain is Phosphonates import ATP-binding protein PhnC 2 from Trichodesmium erythraeum (strain IMS101).